Here is a 224-residue protein sequence, read N- to C-terminus: Cytochrome c oxidase subunit 2 (224 aa).

Topologically, residues 1–26 (MSTWGQINLMDPASPIQMEMMLFHDH) are mitochondrial intermembrane. A helical membrane pass occupies residues 27-48 (AMAILIGIFTLVSLLGVKLCFN). At 49–62 (TLSTRTMHEAQLLE) the chain is on the mitochondrial matrix side. The chain crosses the membrane as a helical span at residues 63-82 (TLWTILPAFLLVWLALPSLR). Over 83-224 (LLYLLDEQGS…DVKDFIKMCN (142 aa)) the chain is Mitochondrial intermembrane. Cu cation-binding residues include His161, Cys196, Glu198, Cys200, His204, and Met207. Glu198 contacts Mg(2+).

This sequence belongs to the cytochrome c oxidase subunit 2 family. As to quaternary structure, component of the cytochrome c oxidase (complex IV, CIV), a multisubunit enzyme composed of a catalytic core of 3 subunits and several supernumerary subunits. The complex exists as a monomer or a dimer and forms supercomplexes (SCs) in the inner mitochondrial membrane with ubiquinol-cytochrome c oxidoreductase (cytochrome b-c1 complex, complex III, CIII). Cu cation is required as a cofactor.

Its subcellular location is the mitochondrion inner membrane. It catalyses the reaction 4 Fe(II)-[cytochrome c] + O2 + 8 H(+)(in) = 4 Fe(III)-[cytochrome c] + 2 H2O + 4 H(+)(out). Component of the cytochrome c oxidase, the last enzyme in the mitochondrial electron transport chain which drives oxidative phosphorylation. The respiratory chain contains 3 multisubunit complexes succinate dehydrogenase (complex II, CII), ubiquinol-cytochrome c oxidoreductase (cytochrome b-c1 complex, complex III, CIII) and cytochrome c oxidase (complex IV, CIV), that cooperate to transfer electrons derived from NADH and succinate to molecular oxygen, creating an electrochemical gradient over the inner membrane that drives transmembrane transport and the ATP synthase. Cytochrome c oxidase is the component of the respiratory chain that catalyzes the reduction of oxygen to water. Electrons originating from reduced cytochrome c in the intermembrane space (IMS) are transferred via the dinuclear copper A center (CU(A)) of subunit 2 and heme A of subunit 1 to the active site in subunit 1, a binuclear center (BNC) formed by heme A3 and copper B (CU(B)). The BNC reduces molecular oxygen to 2 water molecules using 4 electrons from cytochrome c in the IMS and 4 protons from the mitochondrial matrix. The sequence is that of Cytochrome c oxidase subunit 2 (COII) from Albinaria caerulea (Land snail).